Reading from the N-terminus, the 691-residue chain is Replication and transcription activator (691 aa).

O-linked (GlcNAc) threonine; by host glycans are attached at residues T366 and T367. Disordered stretches follow at residues 482–582 (EASG…SLPP) and 626–677 (LDTP…QESG). Low complexity predominate over residues 504–513 (TAAATAAEAT). Positions 515–531 (PKRKQRSKERSSKKRKA) are enriched in basic residues. The segment covering 539–556 (TTPSTTTPGTSLGSITTP) has biased composition (low complexity). The segment covering 655-677 (EYTQLQPVRATSATPANEVQESG) has biased composition (polar residues).

This sequence belongs to the herpesviridae TAF50 family. Homotetramer. Interacts with KTA/ORF57. Interacts with host PARP1; this interaction negatively regulates RTA/ORF50 transactivation activity. Interacts with host SMC5 and SMC6; these interactions remove the repressive chromatin structure to allow viral reactivation. Interacts with host POU2F1; this interaction enhances RTA/ORF50-mediated transactivation of several viral promoters including K-bZIP promoter.

It is found in the host nucleus. It catalyses the reaction S-ubiquitinyl-[E2 ubiquitin-conjugating enzyme]-L-cysteine + [acceptor protein]-L-lysine = [E2 ubiquitin-conjugating enzyme]-L-cysteine + N(6)-ubiquitinyl-[acceptor protein]-L-lysine.. Transcriptional transactivator that is necessary and sufficient for reactivation of the virus from latency. Acts post-transcriptionally and transcriptionally to regulate viral lytic gene expression and synergistically with ORF57 activates certain early and late viral promoters including its own promoter. Autostimulation on its promoter is mediated by the formation of a ternary complex between ORF50 and the cellular components HGMB1 and POU2F1. Also possesses a bimodal activity in targeting proteins for degradation through using its own E3 ligase activity or by stabilizing and chaperoning host E3 ligases. These activities help to subvert the host innate and adaptive immune responses while also modulating the host transcriptome and protein landscape to promote virus production. For instance, targets the host SMC5/6 complex for ubiquitination and subsequent degradation through the ubiquitin-proteasome during reactivation while during latency, host SMC5/6 complex binds to the viral episome and condenses viral chromatin, creating a repressive chromatin structure to silence genome transcription. Hijacks the cellular E3 ligase complex RNF20/40 to increase the level of transcriptionally active RNA polymerase II on viral gene promoters thereby facilitating lytic gene expression. Acts as a SUMO-targeting ubiquitin ligase and affects general sumoylation of cellular proteins. Promotes the polyubiquitination and subsequent degradation of host MYD88 and thereby inhibits MYD88-mediated TLR4 signaling. Induces the degradation of vFLIP/ORF71 together with cellular ubiquitin ligase ITCH to prevent vFLIP-induced NF-kappa-B signaling. This Homo sapiens (Human) protein is Replication and transcription activator (ORF50).